We begin with the raw amino-acid sequence, 109 residues long: MSGKYFEATDQNFQAEILNSDKVALVDFWAAWCGPCMMLGPVIEELAGDYEGKAIIAKLNVDENPNTAGQYGIRSIPTMLIIKGGKVVDQMVGALPKNMIAKKLDEHIG.

Positions 2 to 109 (SGKYFEATDQ…IAKKLDEHIG (108 aa)) constitute a Thioredoxin domain. Residues Cys-33 and Cys-36 are joined by a disulfide bond.

Belongs to the thioredoxin family.

Participates in various redox reactions through the reversible oxidation of its active center dithiol to a disulfide and catalyzes dithiol-disulfide exchange reactions. This is Thioredoxin 2 (trx2) from Chlorobaculum tepidum (strain ATCC 49652 / DSM 12025 / NBRC 103806 / TLS) (Chlorobium tepidum).